Here is a 205-residue protein sequence, read N- to C-terminus: Tumor suppressor candidate gene 1 protein homolog (205 aa).

The segment covering 1-12 (MWRMRGGATRRG) has biased composition (low complexity). Positions 1-49 (MWRMRGGATRRGSCGGEGGGSRGESGRLGRAREGGGGGGGVGWRGRAGG) are disordered. Gly residues predominate over residues 13 to 23 (SCGGEGGGSRG). The span at 24–33 (ESGRLGRARE) shows a compositional bias: basic and acidic residues. Positions 34 to 48 (GGGGGGGVGWRGRAG) are enriched in gly residues. The stretch at 66-110 (LEALRARDERDRQNARLREENARLRLENRRLRRENRSLFRQALRL) forms a coiled coil. Disordered regions lie at residues 113–149 (DSGEREAAVETLAPDEPATNRKARGHGREEEPGSPRA) and 174–205 (GARPPGAIEEPPLQETATGLCAHDPDVPRPWL). Serine 146 carries the phosphoserine modification. Positions 196 to 205 (HDPDVPRPWL) are enriched in basic and acidic residues.

This Mus musculus (Mouse) protein is Tumor suppressor candidate gene 1 protein homolog (Tusc1).